The primary structure comprises 468 residues: Ribosomal protein uS12 methylthiotransferase RimO (468 aa).

Residues 16-130 (NKIHFISLGC…ILSAIESRES (115 aa)) form the MTTase N-terminal domain. [4Fe-4S] cluster contacts are provided by C25, C61, C93, C164, C168, and C171. One can recognise a Radical SAM core domain in the interval 150–382 (STPKHYAYLK…SQIQKRNVDK (233 aa)). A TRAM domain is found at 385 to 455 (QKLIGEKIEA…GYDLVGRVVK (71 aa)).

It belongs to the methylthiotransferase family. RimO subfamily. The cofactor is [4Fe-4S] cluster.

It localises to the cytoplasm. It catalyses the reaction L-aspartate(89)-[ribosomal protein uS12]-hydrogen + (sulfur carrier)-SH + AH2 + 2 S-adenosyl-L-methionine = 3-methylsulfanyl-L-aspartate(89)-[ribosomal protein uS12]-hydrogen + (sulfur carrier)-H + 5'-deoxyadenosine + L-methionine + A + S-adenosyl-L-homocysteine + 2 H(+). In terms of biological role, catalyzes the methylthiolation of an aspartic acid residue of ribosomal protein uS12. This is Ribosomal protein uS12 methylthiotransferase RimO from Chlamydia pneumoniae (Chlamydophila pneumoniae).